Consider the following 403-residue polypeptide: MLTTLIYRSHIRDDEPVKKIEEMVSIANRRNMQSDVTGILLFNGSHFFQLLEGPEEQVKMIYRAICQDPRHYNIVELLCDYAPARRFGKAGMELFDLRLHERDDVLQAVFDKGTSKFQLTYDDRALQFFRTFVLATEQSTYFEIPAEDSWLFIADGSDKELDSCALSPTINDHFAFHPIVDPLSRRIIAFEAIVQKNEDSPSAIAVGQRKDGEIYTADLKSKALAFTMAHALELGDKMISINLLPMTLVNEPDAVSFLLNEIKANALVPEQIIVEFTESEVISRFDEFAEAIKSLKAAGISVAIDHFGAGFAGLLLLSRFQPDRIKISQELITNVHKSGPRQAIIQAIIKCCTSLEIQVSAMGVATPEEWMWLESAGIEMFQGDLFAKAKLNGIPSIAWPEKK.

The region spanning 2–93 (LTTLIYRSHI…ARRFGKAGME (92 aa)) is the BLUF domain. A joining helix region spans residues 98-144 (RLHERDDVLQAVFDKGTSKFQLTYDDRALQFFRTFVLATEQSTYFEI). The 249-residue stretch at 155 to 403 (DGSDKELDSC…IPSIAWPEKK (249 aa)) folds into the EAL domain.

As to quaternary structure, monomer, it undergoes transient dimerization following photoexcitation or upon temperature reduction, with a relaxation time of about 2 minutes. The dimer may be the inactive state. Interacts with the N- and C-terminal domains of BluR. Can also interact with the C-terminal domain of MlrA. FAD serves as cofactor.

Binds to and releases the BluR repressor from its bound DNA target in a blue light-dependent (470 nm) fashion. A shift to low temperature also triggers a BluF-mediated relief of repression by BluR, suggesting BluF may serve as a thermometer. Blue light may act to increase the affinity of BluF for BluR, allowing it to be released from its operator. The protein has a reversible photocycle, and undergoes structural changes, probably in the EAL domain, in response to light. This is Blue light- and temperature-regulated antirepressor BluF from Escherichia coli (strain K12).